Here is a 307-residue protein sequence, read N- to C-terminus: Auxin-induced protein PCNT115 (307 aa).

Tyr-64 functions as the Proton donor in the catalytic mechanism. His-136 provides a ligand contact to substrate. An NADP(+)-binding site is contributed by 215 to 225; the sequence is SPLGRGFLSSG.

The protein belongs to the aldo/keto reductase family. Aldo/keto reductase 2 subfamily.

This Nicotiana tabacum (Common tobacco) protein is Auxin-induced protein PCNT115.